Consider the following 194-residue polypeptide: ATP-dependent Clp protease proteolytic subunit (194 aa).

Residue Ser-98 is the Nucleophile of the active site. His-123 is a catalytic residue.

Belongs to the peptidase S14 family. As to quaternary structure, fourteen ClpP subunits assemble into 2 heptameric rings which stack back to back to give a disk-like structure with a central cavity, resembling the structure of eukaryotic proteasomes.

The protein resides in the cytoplasm. It catalyses the reaction Hydrolysis of proteins to small peptides in the presence of ATP and magnesium. alpha-casein is the usual test substrate. In the absence of ATP, only oligopeptides shorter than five residues are hydrolyzed (such as succinyl-Leu-Tyr-|-NHMec, and Leu-Tyr-Leu-|-Tyr-Trp, in which cleavage of the -Tyr-|-Leu- and -Tyr-|-Trp bonds also occurs).. Its function is as follows. Cleaves peptides in various proteins in a process that requires ATP hydrolysis. Has a chymotrypsin-like activity. Plays a major role in the degradation of misfolded proteins. This is ATP-dependent Clp protease proteolytic subunit from Staphylococcus epidermidis (strain ATCC 35984 / DSM 28319 / BCRC 17069 / CCUG 31568 / BM 3577 / RP62A).